The primary structure comprises 314 residues: NF-kappa-B inhibitor alpha (314 aa).

A disordered region spans residues 1-39; the sequence is MFQPAGHGQDWAMEGPRDGLKKERLVDDRHDSGLDSMKD. Residues 15-39 show a composition bias toward basic and acidic residues; that stretch reads GPRDGLKKERLVDDRHDSGLDSMKD. Residue K21 forms a Glycyl lysine isopeptide (Lys-Gly) (interchain with G-Cter in SUMO); alternate linkage. K21 participates in a covalent cross-link: Glycyl lysine isopeptide (Lys-Gly) (interchain with G-Cter in ubiquitin); alternate. K22 participates in a covalent cross-link: Glycyl lysine isopeptide (Lys-Gly) (interchain with G-Cter in ubiquitin). A Destruction motif motif is present at residues 30-36; that stretch reads HDSGLDS. S32 bears the Phosphoserine; by IKKA and IKKB mark. Position 36 is a phosphoserine; by IKKA, IKKB, IKKE and TBK1 (S36). At Y42 the chain carries Phosphotyrosine; by Tyr-kinases. The Nuclear export signal motif lies at 45 to 54; that stretch reads MVKELREIRL. A Nuclear import signal motif is present at residues 110–120; it reads LQQTPLHLAVI. ANK repeat units lie at residues 110–139, 143–172, 182–211, and 216–245; these read LQQTPLHLAVITNQPGIAEALLKAGCDPEL, RGNTPLHLACEQGCLASVAVLTQTCTPQHL, NGHTCLHLASIHGYLGIVEHLVTLGADVNA, and NGRTALHLAVDLQNPDLVSLLLKCGADVNR. Residues N210 and N244 each carry the (3S)-3-hydroxyasparagine; by HIF1AN modification. Phosphoserine; by CK2 occurs at positions 283 and 288. A Phosphothreonine; by CK2 modification is found at T291. S293 is modified (phosphoserine; by CK2). Residue T296 is modified to Phosphothreonine.

The protein belongs to the NF-kappa-B inhibitor family. Interacts with RELA; the interaction requires the nuclear import signal. Part of a 70-90 kDa complex at least consisting of CHUK, IKBKB, NFKBIA, RELA, ELP1 and MAP3K14. Interacts with NKIRAS1 and NKIRAS2. Interacts with RWDD3; the interaction enhances sumoylation. Interacts with PRMT2. Interacts with PRKACA in platelets; this interaction is disrupted by thrombin and collagen. Interacts with MEFV. Interacts with DDRGK1; positively regulates NFKBIA phosphorylation and degradation. Interacts with HNRNPA2B1; the interaction may be mediated by the RRM2 domain of HNRNPA2B1, and HNRNPA2B1 may interact simultaneously with FAM76B and either NFKBIA or NFKBIE to form a complex. Phosphorylated at Ser-32 and Ser-36 by IKKA/CHUK and IKKB/IKBKB; disables inhibition of NF-kappa-B DNA-binding activity. Phosphorylation at positions 32 and 36 is prerequisite to recognition by the SCF(FBXW11) and SCF(BTRC) complexes, leading to polyubiquitination and subsequent degradation. Post-translationally, polyubiquitinated at Lys-21 and/or Lys-22 following phosphorylation at Ser-32 and Ser-36. Monoubiquitinated at Lys-21 and/or Lys-22 by UBE2D3. Ubiquitin chain elongation is then performed by CDC34 in cooperation with the SCF(FBXW11) E3 ligase complex, building ubiquitin chains from the UBE2D3-primed NFKBIA-linked ubiquitin. The resulting polyubiquitination leads to protein degradation. Also ubiquitinated by the SCF(BTRC) complex following stimulus-dependent phosphorylation at Ser-32 and Ser-36. Deubiquitinated by USP38, leading to NF-kappa-B inhibition. In terms of processing, sumoylated; sumoylation requires the presence of the nuclear import signal. Sumoylation blocks ubiquitination and proteasome-mediated degradation of the protein thereby increasing the protein stability. Hydroxylated by HIF1AN.

The protein resides in the cytoplasm. Its subcellular location is the nucleus. Functionally, inhibits the activity of dimeric NF-kappa-B/REL complexes by trapping REL (RELA/p65 and NFKB1/p50) dimers in the cytoplasm by masking their nuclear localization signals. On cellular stimulation by immune and pro-inflammatory responses, becomes phosphorylated promoting ubiquitination and degradation, enabling the dimeric RELA to translocate to the nucleus and activate transcription. The chain is NF-kappa-B inhibitor alpha (Nfkbia) from Rattus norvegicus (Rat).